The following is a 640-amino-acid chain: SUMO-activating enzyme subunit 2 (640 aa).

ATP is bound by residues glycine 24–glycine 29, aspartate 48, asparagine 56–arginine 59, lysine 72, serine 95–isoleucine 96, and aspartate 117–arginine 122. Positions 158 and 161 each coordinate Zn(2+). A Glycyl lysine isopeptide (Lys-Gly) (interchain with G-Cter in SUMO1) cross-link involves residue lysine 164. The active-site Glycyl thioester intermediate is the cysteine 173. Residue lysine 190 forms a Glycyl lysine isopeptide (Lys-Gly) (interchain with G-Cter in SUMO) linkage. Positions alanine 202 to glutamate 231 are disordered. Serine 207 bears the Phosphoserine mark. Over residues alanine 222–glutamate 231 the composition is skewed to basic and acidic residues. Lysine 236 participates in a covalent cross-link: Glycyl lysine isopeptide (Lys-Gly) (interchain with G-Cter in SUMO1); alternate. Residues lysine 236 and lysine 257 each participate in a glycyl lysine isopeptide (Lys-Gly) (interchain with G-Cter in SUMO2); alternate cross-link. Glycyl lysine isopeptide (Lys-Gly) (interchain with G-Cter in SUMO); alternate cross-links involve residues lysine 257 and lysine 271. Lysine 271 is modified (N6-acetyllysine; alternate). Lysine 275 participates in a covalent cross-link: Glycyl lysine isopeptide (Lys-Gly) (interchain with G-Cter in SUMO). Lysine 371 participates in a covalent cross-link: Glycyl lysine isopeptide (Lys-Gly) (interchain with G-Cter in SUMO2). A Glycyl lysine isopeptide (Lys-Gly) (interchain with G-Cter in SUMO1); alternate cross-link involves residue lysine 420. Lysine 420 is covalently cross-linked (Glycyl lysine isopeptide (Lys-Gly) (interchain with G-Cter in SUMO2); alternate). Positions 441 and 444 each coordinate Zn(2+). The residue at position 507 (serine 507) is a Phosphoserine. Residue lysine 540 forms a Glycyl lysine isopeptide (Lys-Gly) (interchain with G-Cter in SUMO2) linkage. A compositionally biased stretch (basic and acidic residues) spans proline 551 to alanine 563. The interval proline 551 to aspartate 640 is disordered. A compositionally biased stretch (polar residues) spans serine 565–glutamine 582. Residues glutamate 583–serine 597 are compositionally biased toward acidic residues. Phosphoserine is present on serine 592. Positions glutamate 606–lysine 630 are enriched in basic and acidic residues. A Glycyl lysine isopeptide (Lys-Gly) (interchain with G-Cter in SUMO) cross-link involves residue lysine 611. Residue lysine 613 forms a Glycyl lysine isopeptide (Lys-Gly) (interchain with G-Cter in SUMO); alternate linkage. Lysine 613 carries the N6-acetyllysine; alternate modification. Glycyl lysine isopeptide (Lys-Gly) (interchain with G-Cter in SUMO) cross-links involve residues lysine 617 and lysine 623. Residues glutamate 631–aspartate 640 are compositionally biased toward acidic residues.

Belongs to the ubiquitin-activating E1 family. As to quaternary structure, heterodimer of SAE1 and UBA2/SAE2. The heterodimer corresponds to the two domains that are encoded on a single polypeptide chain in ubiquitin-activating enzyme E1. Interacts with UBE2I. Post-translationally, sumoylated with SUMO1 and SUMO2/3 and by UBC9. Sumoylation at Lys-236 inhibits enzymatic activity. Sumoylation at the C-terminal lysine cluster plays an essential role in nuclear trafficking.

The protein localises to the cytoplasm. The protein resides in the nucleus. It functions in the pathway protein modification; protein sumoylation. Its function is as follows. The heterodimer acts as an E1 ligase for SUMO1, SUMO2, SUMO3, and probably SUMO4. It mediates ATP-dependent activation of SUMO proteins followed by formation of a thioester bond between a SUMO protein and a conserved active site cysteine residue on UBA2/SAE2. The chain is SUMO-activating enzyme subunit 2 (UBA2) from Homo sapiens (Human).